A 283-amino-acid chain; its full sequence is MAEITASLVKELRERTGAGMMDCKKALVEANGDIELAIENMRKSGAIKAAKKAGNVAADGVILTKIDGTYGIILEVNCQTDFVAKDGGFQAFANKVLDAAIAGKITDVDVLKAQFEEERVALVAKIGENINIRRVASIEGDVLGSYQHGARIGVLVAAKGADEELVKQLAMHIAASKPEFVKPEDVSAEVVEKEYQVQLDIAMQSGKPKEIAEKMVEGRMKKFTGEVSLTGQPFVMDPTKSVAQLLKEHNADVTGFIRFEVGEGIEKVETDFAAEVAAMSKQS.

Residues 80–83 form an involved in Mg(2+) ion dislocation from EF-Tu region; it reads TDFV.

The protein belongs to the EF-Ts family.

It localises to the cytoplasm. In terms of biological role, associates with the EF-Tu.GDP complex and induces the exchange of GDP to GTP. It remains bound to the aminoacyl-tRNA.EF-Tu.GTP complex up to the GTP hydrolysis stage on the ribosome. The sequence is that of Elongation factor Ts from Enterobacter sp. (strain 638).